We begin with the raw amino-acid sequence, 509 residues long: Angiopoietin-4 (509 aa).

An N-terminal signal peptide occupies residues 1–21 (MLCQPAMLLDGLLLLATMAAA). Residues Asn105, Asn135, Asn149, Asn167, Asn256, Asn306, Asn317, and Asn417 are each glycosylated (N-linked (GlcNAc...) asparagine). A coiled-coil region spans residues 181–269 (LSTNKLERQM…LQQQQQQLTE (89 aa)). Residues 288-508 (KTPKPVFQDC…GTRMMLRPMG (221 aa)) enclose the Fibrinogen C-terminal domain. Cysteines 297 and 326 form a disulfide. Positions 416 to 436 (VNDSSSSAGRKNSLAPQGTKF) are disordered. Cys450 and Cys463 are joined by a disulfide.

As to quaternary structure, homodimer; disulfide-linked. Interacts with TEK/TIE2. As to expression, widely expressed.

The protein localises to the secreted. Binds to TEK/TIE2, modulating ANGPT1 signaling. Can induce tyrosine phosphorylation of TEK/TIE2. Promotes endothelial cell survival, migration and angiogenesis. The sequence is that of Angiopoietin-4 (Angpt4) from Mus musculus (Mouse).